A 361-amino-acid polypeptide reads, in one-letter code: sn-glycerol-3-phosphate import ATP-binding protein UgpC (361 aa).

In terms of domain architecture, ABC transporter spans 4–235 (VTLRNVRKTY…PATTFVASFI (232 aa)). 37–44 (GPSGCGKS) provides a ligand contact to ATP.

It belongs to the ABC transporter superfamily. sn-glycerol-3-phosphate importer (TC 3.A.1.1.3) family. In terms of assembly, the complex is composed of two ATP-binding proteins (UgpC), two transmembrane proteins (UgpA and UgpE) and a solute-binding protein (UgpB).

It is found in the cell inner membrane. The enzyme catalyses sn-glycerol 3-phosphate(out) + ATP + H2O = sn-glycerol 3-phosphate(in) + ADP + phosphate + H(+). Functionally, part of the ABC transporter complex UgpBAEC involved in sn-glycerol-3-phosphate (G3P) import. Responsible for energy coupling to the transport system. In Rhodopseudomonas palustris (strain BisA53), this protein is sn-glycerol-3-phosphate import ATP-binding protein UgpC.